The chain runs to 497 residues: Glutamate--tRNA ligase (497 aa).

The short motif at 13–23 is the 'HIGH' region element; that stretch reads PSPTGTPHVGM. The 'KMSKS' region motif lies at 257-261; that stretch reads KLSKR. K260 is a binding site for ATP.

The protein belongs to the class-I aminoacyl-tRNA synthetase family. Glutamate--tRNA ligase type 1 subfamily. Monomer.

The protein localises to the cytoplasm. The enzyme catalyses tRNA(Glu) + L-glutamate + ATP = L-glutamyl-tRNA(Glu) + AMP + diphosphate. In terms of biological role, catalyzes the attachment of glutamate to tRNA(Glu) in a two-step reaction: glutamate is first activated by ATP to form Glu-AMP and then transferred to the acceptor end of tRNA(Glu). In Corynebacterium diphtheriae (strain ATCC 700971 / NCTC 13129 / Biotype gravis), this protein is Glutamate--tRNA ligase.